We begin with the raw amino-acid sequence, 396 residues long: S-arrestin (396 aa).

The span at 375-386 (ARDPLKGELQAE) shows a compositional bias: basic and acidic residues. Residues 375–396 (ARDPLKGELQAEEKEEEEDDEK) form a disordered region. Positions 387–396 (EKEEEEDDEK) are enriched in acidic residues.

The protein belongs to the arrestin family. Interacts with RHO (via the phosphorylated C-terminus).

The protein localises to the cell projection. It is found in the cilium. Its subcellular location is the photoreceptor outer segment. It localises to the membrane. Functionally, binds to photoactivated, phosphorylated RHO and terminates RHO signaling via G-proteins by competing with G-proteins for the same binding site on RHO. May play a role in preventing light-dependent degeneration of retinal photoreceptor cells. The polypeptide is S-arrestin (sag) (Xenopus laevis (African clawed frog)).